The primary structure comprises 582 residues: MAVRPRIQLLDTVTINQIAAGEVIENAVSVVKELVENALDAGADEIEVETLGGGQGLIVVKDNGCGMSSDEVTLALKRHATSKIEEFSDVFSLSSFGFRGEALPAIASISKMEILSCPKGEEGSRTIIHGGEVIAAEAKPRQLGTTISVDSLFYNVPVRRGFQKSPQTNRIAMRKLLENRILSLESVGWSWISERQQEFHILKHQGLAERVAFVMGEGFMQEALRVDRVEEPIRIVGFLGSPCFHRPTRLGQRIFINDRPVDSPLISKQISEAYTMLLPPQRYPVFVLKLYLPPQWCDFNVHPQKTEVRILKEEFVREFLSESIGEVLARSQESSSYKKTSLTLPTLRFFDGQLPEISLEQPRESMSLPVTQLATPSIRSISSLGCQQEIPAVDTQTEIVWGESQEVRFLTSLGKIVLAEDSEGVHAIFTEAARKHLFYLSLIENQQEHYKSQSFLVPLCLEVTPQERVFLLSHIEEFKQLGIEISQIGPCVFAIESAPTFIGEEELKSWILSLAAESHTKVDKKAIALLIKESLTQTIFGKTLRTFDISWLSLLWQIGKPEKAFDGTLIRRLILDEDFIKE.

This sequence belongs to the DNA mismatch repair MutL/HexB family.

Its function is as follows. This protein is involved in the repair of mismatches in DNA. It is required for dam-dependent methyl-directed DNA mismatch repair. May act as a 'molecular matchmaker', a protein that promotes the formation of a stable complex between two or more DNA-binding proteins in an ATP-dependent manner without itself being part of a final effector complex. The polypeptide is DNA mismatch repair protein MutL (Chlamydia abortus (strain DSM 27085 / S26/3) (Chlamydophila abortus)).